A 401-amino-acid polypeptide reads, in one-letter code: MSDRNIRVEPVVGRAVEEQDVEIVERKGLGHPDSLCDGIAEHVSQALARAYIDRVGKVLHYNTDETQLVAGTAAPAFGGGEVVDPIYLLITGRATKEYEGTKIPAETIALRAAREYINETLPFLEFGTDVVVDVKLGEGSGDLQEVFGEDGKQVPMSNDTSFGVGHAPLTETERIVLEAERALNGDYSDDNPAVGQDIKVMGKREGDDIDVTVAVAMVDRYVDDLDGYEAAVAGVREFVADLATDYTDRNVSVHVNTADDYDEGAIYLTTTGTSAEQGDDGSVGRGNRSNGLITPNRSMSMEATSGKNPVNHIGKIYNLLSTEIARTVVDEVDGIREIRIRLLSQIGQPIDKPHVADANLVTEDGIEIADIEDEVEAIIDAELENVTSITERVIDGELTTF.

137–142 (GEGSGD) is an ATP binding site. The segment at 272–305 (GTSAEQGDDGSVGRGNRSNGLITPNRSMSMEATS) is disordered. The span at 287–305 (NRSNGLITPNRSMSMEATS) shows a compositional bias: polar residues.

This sequence belongs to the AdoMet synthase 2 family. Mg(2+) is required as a cofactor.

It carries out the reaction L-methionine + ATP + H2O = S-adenosyl-L-methionine + phosphate + diphosphate. The protein operates within amino-acid biosynthesis; S-adenosyl-L-methionine biosynthesis; S-adenosyl-L-methionine from L-methionine: step 1/1. Catalyzes the formation of S-adenosylmethionine from methionine and ATP. This Natronomonas pharaonis (strain ATCC 35678 / DSM 2160 / CIP 103997 / JCM 8858 / NBRC 14720 / NCIMB 2260 / Gabara) (Halobacterium pharaonis) protein is S-adenosylmethionine synthase.